The primary structure comprises 189 residues: Transcription factor FapR (189 aa).

This sequence belongs to the FapR family.

Functionally, transcriptional factor involved in regulation of membrane lipid biosynthesis by repressing genes involved in fatty acid and phospholipid metabolism. This is Transcription factor FapR from Listeria welshimeri serovar 6b (strain ATCC 35897 / DSM 20650 / CCUG 15529 / CIP 8149 / NCTC 11857 / SLCC 5334 / V8).